The primary structure comprises 830 residues: Protein translocase subunit SecA (830 aa).

Residues glutamine 86, 104–108, and aspartate 491 each bind ATP; that span reads GEGKT. Residues cysteine 813, cysteine 815, cysteine 824, and cysteine 825 each coordinate Zn(2+).

The protein belongs to the SecA family. In terms of assembly, monomer and homodimer. Part of the essential Sec protein translocation apparatus which comprises SecA, SecYEG and auxiliary proteins SecDF. Other proteins may also be involved. The cofactor is Zn(2+).

The protein localises to the cell membrane. The protein resides in the cytoplasm. It carries out the reaction ATP + H2O + cellular proteinSide 1 = ADP + phosphate + cellular proteinSide 2.. Functionally, part of the Sec protein translocase complex. Interacts with the SecYEG preprotein conducting channel. Has a central role in coupling the hydrolysis of ATP to the transfer of proteins into and across the cell membrane, serving as an ATP-driven molecular motor driving the stepwise translocation of polypeptide chains across the membrane. The sequence is that of Protein translocase subunit SecA from Syntrophomonas wolfei subsp. wolfei (strain DSM 2245B / Goettingen).